Consider the following 86-residue polypeptide: RNA-binding protein Hfq (86 aa).

A Sm domain is found at 9-68 (DPYLNTLRKEKVPVSIYLVNGIKLQGQIESFDQFVVLLKNTVSQMVYKHAISTVVPARPV). Residues 66 to 86 (RPVRLPSPSDAEHGDSEPGNA) are disordered. A compositionally biased stretch (basic and acidic residues) spans 75 to 86 (DAEHGDSEPGNA).

The protein belongs to the Hfq family. As to quaternary structure, homohexamer.

RNA chaperone that binds small regulatory RNA (sRNAs) and mRNAs to facilitate mRNA translational regulation in response to envelope stress, environmental stress and changes in metabolite concentrations. Also binds with high specificity to tRNAs. The polypeptide is RNA-binding protein Hfq (Pseudomonas entomophila (strain L48)).